A 219-amino-acid polypeptide reads, in one-letter code: Small ribosomal subunit protein uS3 (219 aa).

Positions leucine 39–arginine 107 constitute a KH type-2 domain.

It belongs to the universal ribosomal protein uS3 family. Part of the 30S ribosomal subunit. Forms a tight complex with proteins S10 and S14.

Its function is as follows. Binds the lower part of the 30S subunit head. Binds mRNA in the 70S ribosome, positioning it for translation. The polypeptide is Small ribosomal subunit protein uS3 (Desulfatibacillum aliphaticivorans).